The sequence spans 333 residues: Adenosine deaminase (333 aa).

Zn(2+) contacts are provided by H12 and H14. Residues H14, D16, and G170 each contribute to the substrate site. Zn(2+) is bound at residue H197. The active-site Proton donor is the E200. A Zn(2+)-binding site is contributed by D278. D279 is a substrate binding site.

Belongs to the metallo-dependent hydrolases superfamily. Adenosine and AMP deaminases family. Adenosine deaminase subfamily. It depends on Zn(2+) as a cofactor.

The enzyme catalyses adenosine + H2O + H(+) = inosine + NH4(+). It catalyses the reaction 2'-deoxyadenosine + H2O + H(+) = 2'-deoxyinosine + NH4(+). Catalyzes the hydrolytic deamination of adenosine and 2-deoxyadenosine. The protein is Adenosine deaminase of Pseudoalteromonas translucida (strain TAC 125).